We begin with the raw amino-acid sequence, 527 residues long: NAD(P)H-quinone oxidoreductase chain 4 1 (527 aa).

The next 14 membrane-spanning stretches (helical) occupy residues Phe-5 to Ile-25, Trp-35 to Gly-55, Leu-90 to Phe-110, Pro-112 to Val-132, Leu-136 to Trp-156, Phe-168 to Phe-188, Leu-211 to His-231, Thr-242 to Leu-262, Ala-274 to Thr-294, Ile-310 to Gly-330, Ala-331 to Ala-351, Leu-386 to Thr-406, Val-416 to Met-436, and Val-463 to Val-483.

This sequence belongs to the complex I subunit 4 family.

Its subcellular location is the cellular thylakoid membrane. It catalyses the reaction a plastoquinone + NADH + (n+1) H(+)(in) = a plastoquinol + NAD(+) + n H(+)(out). The enzyme catalyses a plastoquinone + NADPH + (n+1) H(+)(in) = a plastoquinol + NADP(+) + n H(+)(out). In terms of biological role, NDH-1 shuttles electrons from NAD(P)H, via FMN and iron-sulfur (Fe-S) centers, to quinones in the respiratory chain. The immediate electron acceptor for the enzyme in this species is believed to be plastoquinone. Couples the redox reaction to proton translocation (for every two electrons transferred, four hydrogen ions are translocated across the cytoplasmic membrane), and thus conserves the redox energy in a proton gradient. The sequence is that of NAD(P)H-quinone oxidoreductase chain 4 1 from Trichodesmium erythraeum (strain IMS101).